We begin with the raw amino-acid sequence, 325 residues long: Coiled-coil domain-containing protein 160 (325 aa).

2 disordered regions span residues 18–45 (SAQD…KGME) and 81–123 (ENKR…CSTD). Over residues 81 to 91 (ENKRNISKNET) the composition is skewed to basic and acidic residues. A compositionally biased stretch (polar residues) spans 92-123 (DTNSASYESSNVDVTTEESFNSTEDNSTCSTD). A coiled-coil region spans residues 144–288 (KLCLNLLNEE…SVIKNELRTE (145 aa)).

The protein belongs to the CCDC160 family.

The chain is Coiled-coil domain-containing protein 160 (CCDC160) from Homo sapiens (Human).